We begin with the raw amino-acid sequence, 873 residues long: Calmodulin-dependent glutamylase SidJ (873 aa).

The interval 16–90 (QSEDNPSETA…TTSTTKQKGP (75 aa)) is disordered. The segment covering 22–58 (SETAVETTDVSTKIKTTDTTQEESSVKTKTVVPTQPG) has biased composition (polar residues). Mg(2+) contacts are provided by Asp542 and Asp545. The disordered stretch occupies residues 851 to 873 (NLSEKSDIDSEKPESERTTDKRL).

As to quaternary structure, interacts with host calmodulin/CALM1; this interaction is required for glutamylase activity. Mg(2+) serves as cofactor.

The enzyme catalyses L-glutamyl-[protein] + L-glutamate + ATP = gamma-L-glutamyl-L-glutamyl-[protein] + ADP + phosphate + H(+). It catalyses the reaction (L-glutamyl)(n)-gamma-L-glutamyl-L-glutamyl-[protein] + L-glutamate + ATP = (L-glutamyl)(n+1)-gamma-L-glutamyl-L-glutamyl-[protein] + ADP + phosphate + H(+). Its activity is regulated as follows. Glytamylation catalyzed by SidJ requires host calmodulin and can be regulated by intracellular changes in Ca2+ concentrations. Also requires ATP. Functionally, glutamylase that mediates the covalent attachment of glutamate moieties to SdeA on one of the catalytic residues that is required for its mono-ADP-ribosyltransferase activity. In turn, inhibits SdeA ubiquitinating activity. Also glutamylates related SdeB, SdeC and SidE. Glutamylase activity only occurs in the host since it requires host calmodulin. May also reverse the SdeA-mediated substrate ubiquitination by cleaving the phosphodiester bond that links phosphoribosylated ubiquitin to protein substrates via its deubiquitinase activity. This chain is Calmodulin-dependent glutamylase SidJ, found in Legionella pneumophila subsp. pneumophila (strain Philadelphia 1 / ATCC 33152 / DSM 7513).